A 437-amino-acid chain; its full sequence is Elongation factor 1-gamma (437 aa).

Ala2 bears the N-acetylalanine mark. Positions 2-87 (AAGTLYTYPE…YVSNEELRGS (86 aa)) constitute a GST N-terminal domain. A GST C-terminal domain is found at 88 to 216 (TPEAAAQVVQ…VKLCEKMAQF (129 aa)). N6-acetyllysine is present on residues Lys147 and Lys212. The segment covering 221–254 (FAESQPKKDTPRKEKGSREEKQKPQAERKEEKKA) has biased composition (basic and acidic residues). A disordered region spans residues 221-268 (FAESQPKKDTPRKEKGSREEKQKPQAERKEEKKAAAPAPEEEMDECEQ). Lys253 is covalently cross-linked (Glycyl lysine isopeptide (Lys-Gly) (interchain with G-Cter in SUMO1)). An EF-1-gamma C-terminal domain is found at 276-437 (AKDPFAHLPK…KAFNQGKIFK (162 aa)). Lys285 participates in a covalent cross-link: Glycyl lysine isopeptide (Lys-Gly) (interchain with G-Cter in SUMO2). Position 401 is an N6-acetyllysine (Lys401). Lys434 bears the N6-acetyllysine; alternate mark. The residue at position 434 (Lys434) is an N6-malonyllysine; alternate.

As to quaternary structure, EF-1 is composed of four subunits: alpha, beta, delta, and gamma.

In terms of biological role, probably plays a role in anchoring the complex to other cellular components. The sequence is that of Elongation factor 1-gamma (EEF1G) from Equus caballus (Horse).